A 388-amino-acid chain; its full sequence is Probable E3 ubiquitin-protein ligase LOG2 (388 aa).

The disordered stretch occupies residues 1 to 43 (MGNISSSGGEGRRRRRRNHTAAPPPPPPPPSSSLPPPPLPTEI). Residue Gly-2 is the site of N-myristoyl glycine attachment. Residues 22 to 40 (APPPPPPPPSSSLPPPPLP) show a composition bias toward pro residues. Residues 159-281 (FTFDATVSGR…GEIKIRVVKQ (123 aa)) form a DAR2 domain region. The RING-type; atypical zinc finger occupies 319 to 358 (CVICLSEPRDTTVLPCRHMCMCSGCAKVLRFQTNRCPICR). The segment at 368–388 (KVHGNNGSGNNTGQGETVEQE) is disordered.

It belongs to the RING-type zinc finger family. LOG2 subfamily. Interacts with GDU1. In terms of processing, myristoylated (in vitro). As to expression, expressed in the vascular tissues in both phloem and xylem parenchyma cells.

It is found in the cell membrane. The enzyme catalyses S-ubiquitinyl-[E2 ubiquitin-conjugating enzyme]-L-cysteine + [acceptor protein]-L-lysine = [E2 ubiquitin-conjugating enzyme]-L-cysteine + N(6)-ubiquitinyl-[acceptor protein]-L-lysine.. Its pathway is protein modification; protein ubiquitination. Acts as an E3 ubiquitin-protein ligase, or as part of E3 complex, which accepts ubiquitin from specific E2 ubiquitin-conjugating enzymes and then transfers it to substrates (in vitro). Required for GLUTAMINE DUMPER 1(GDU1)-induced amino acid secretion and for amino acid homeostasis. Ubiquitinates GDU1 (in vitro). This is Probable E3 ubiquitin-protein ligase LOG2 (LOG2) from Arabidopsis thaliana (Mouse-ear cress).